Here is a 322-residue protein sequence, read N- to C-terminus: Lipoyl synthase 2 (322 aa).

The interval 1-36 (MKVILDLLNNDPRTTQRTERPRHPEKANRPDTPMES) is disordered. Positions 14 to 34 (TTQRTERPRHPEKANRPDTPM) are enriched in basic and acidic residues. Cysteine 67, cysteine 72, cysteine 78, cysteine 93, cysteine 97, cysteine 100, and serine 306 together coordinate [4Fe-4S] cluster. The 217-residue stretch at 79–295 (WAKKHATFMI…EKTAYAKGFL (217 aa)) folds into the Radical SAM core domain.

Belongs to the radical SAM superfamily. Lipoyl synthase family. The cofactor is [4Fe-4S] cluster.

The protein resides in the cytoplasm. The catalysed reaction is [[Fe-S] cluster scaffold protein carrying a second [4Fe-4S](2+) cluster] + N(6)-octanoyl-L-lysyl-[protein] + 2 oxidized [2Fe-2S]-[ferredoxin] + 2 S-adenosyl-L-methionine + 4 H(+) = [[Fe-S] cluster scaffold protein] + N(6)-[(R)-dihydrolipoyl]-L-lysyl-[protein] + 4 Fe(3+) + 2 hydrogen sulfide + 2 5'-deoxyadenosine + 2 L-methionine + 2 reduced [2Fe-2S]-[ferredoxin]. It functions in the pathway protein modification; protein lipoylation via endogenous pathway; protein N(6)-(lipoyl)lysine from octanoyl-[acyl-carrier-protein]: step 2/2. Its function is as follows. Catalyzes the radical-mediated insertion of two sulfur atoms into the C-6 and C-8 positions of the octanoyl moiety bound to the lipoyl domains of lipoate-dependent enzymes, thereby converting the octanoylated domains into lipoylated derivatives. The polypeptide is Lipoyl synthase 2 (Bradyrhizobium diazoefficiens (strain JCM 10833 / BCRC 13528 / IAM 13628 / NBRC 14792 / USDA 110)).